The chain runs to 510 residues: Probable cytochrome P450 312a1 (510 aa).

C455 contributes to the heme binding site.

Belongs to the cytochrome P450 family. Heme is required as a cofactor.

Its subcellular location is the endoplasmic reticulum membrane. It localises to the microsome membrane. Functionally, may be involved in the metabolism of insect hormones and in the breakdown of synthetic insecticides. The polypeptide is Probable cytochrome P450 312a1 (Cyp312a1) (Drosophila melanogaster (Fruit fly)).